A 281-amino-acid chain; its full sequence is CDAN1-interacting nuclease 1 (281 aa).

A Phosphothreonine modification is found at threonine 114.

It is found in the nucleus. The protein resides in the cytoplasm. In terms of biological role, plays a role in erythroid cell differentiation. The chain is CDAN1-interacting nuclease 1 from Mus musculus (Mouse).